A 415-amino-acid polypeptide reads, in one-letter code: Procollagen C-endopeptidase enhancer 2 (415 aa).

An N-terminal signal peptide occupies residues 1-23 (MRGANAWAPLCLLLAAATQLSRQ). Disulfide bonds link Cys-33-Cys-59, Cys-86-Cys-107, Cys-154-Cys-181, Cys-208-Cys-231, Cys-297-Cys-364, Cys-301-Cys-367, and Cys-312-Cys-415. CUB domains follow at residues 33 to 144 (CGGI…FSAA) and 154 to 268 (CGGL…YIFR). Residues 297 to 415 (CQQKCRRTGT…LLDALKNKQC (119 aa)) enclose the NTR domain. A glycan (N-linked (GlcNAc...) asparagine) is linked at Asn-355.

As to quaternary structure, interacts with heparin with high affinity, and type I or II collagen. O-glycosylated; contains sialic acid. Highly expressed in the heart, trabecular meshwork, pituitary gland, bladder, mammary gland, trachea and placenta and weakly expressed in the brain. Expressed in cartilage.

It localises to the secreted. Binds to the C-terminal propeptide of types I and II procollagens and may enhance the cleavage of that propeptide by BMP1. This Homo sapiens (Human) protein is Procollagen C-endopeptidase enhancer 2 (PCOLCE2).